Reading from the N-terminus, the 248-residue chain is 14-3-3 protein sigma (248 aa).

Phosphoserine is present on residues serine 5, serine 74, and serine 248.

The protein belongs to the 14-3-3 family. In terms of assembly, homodimer. Interacts with KRT17 and SAMSN1. Found in a complex with XPO7, EIF4A1, ARHGAP1, VPS26A, VPS29 and VPS35. Interacts with GAB2. Interacts with SRPK2. Interacts with COPS6. Interacts with COP1; this interaction leads to proteasomal degradation. Interacts with the 'Thr-369' phosphorylated form of DAPK2. Interacts with PI4KB. Interacts with SLITRK1. Interacts with LRRK2; this interaction is dependent on LRRK2 phosphorylation. Interacts with PKP3 (via N-terminus); the interaction maintains the cytoplasmic pool of PKP3, facilitates PKP3 exchange at desmosomes and restricts PKP3 localization to existing desmosome cell junctions. Interacts with LCP2. In terms of processing, ubiquitinated. Ubiquitination by RFFL induces proteasomal degradation and indirectly regulates p53/TP53 activation. In terms of tissue distribution, expressed in dorsal skin (at protein level). Expressed in the basal layer of skin epithelium and in outer root sheath of hair follicle.

The protein localises to the cytoplasm. It is found in the nucleus. It localises to the secreted. In terms of biological role, adapter protein implicated in the regulation of a large spectrum of both general and specialized signaling pathways. Binds to a large number of partners, usually by recognition of a phosphoserine or phosphothreonine motif. Binding generally results in the modulation of the activity of the binding partner. Promotes cytosolic retention of GBP1 GTPase by binding to phosphorylated GBP1, thereby inhibiting the innate immune response. Also acts as a TP53/p53-regulated inhibitor of G2/M progression. When bound to KRT17, regulates protein synthesis and epithelial cell growth by stimulating Akt/mTOR pathway. Acts to maintain desmosome cell junction adhesion in epithelial cells via interacting with and sequestering PKP3 to the cytoplasm, thereby restricting its translocation to existing desmosome structures and therefore maintaining desmosome protein homeostasis. Also acts to facilitate PKP3 exchange at desmosome plaques, thereby maintaining keratinocyte intercellular adhesion. May also regulate MDM2 autoubiquitination and degradation and thereby activate p53/TP53. The sequence is that of 14-3-3 protein sigma (Sfn) from Mus musculus (Mouse).